Here is a 2894-residue protein sequence, read N- to C-terminus: Bifunctional DNA-directed RNA polymerase subunit beta-beta' (2894 aa).

The DNA-directed RNA polymerase subunit beta stretch occupies residues 1–1378 (MANFTKLKNR…DVNIYGDEQD (1378 aa)). The segment at 1385–2894 (PIAIKEDERP…QEEYEEDEEE (1510 aa)) is DNA-directed RNA polymerase subunit beta'. Zn(2+)-binding residues include cysteine 1450, cysteine 1452, cysteine 1465, and cysteine 1468. 3 residues coordinate Mg(2+): aspartate 1849, aspartate 1851, and aspartate 1853. The Zn(2+) site is built by cysteine 2179, cysteine 2253, cysteine 2260, and cysteine 2263.

In the N-terminal section; belongs to the RNA polymerase beta chain family. The protein in the C-terminal section; belongs to the RNA polymerase beta' chain family. As to quaternary structure, the RNAP catalytic core consists of 2 alpha, 1 beta/beta' and 1 omega subunit. When a sigma factor is associated with the core the holoenzyme is formed, which can initiate transcription. It depends on Mg(2+) as a cofactor. Zn(2+) is required as a cofactor.

The catalysed reaction is RNA(n) + a ribonucleoside 5'-triphosphate = RNA(n+1) + diphosphate. In terms of biological role, DNA-dependent RNA polymerase catalyzes the transcription of DNA into RNA using the four ribonucleoside triphosphates as substrates. The chain is Bifunctional DNA-directed RNA polymerase subunit beta-beta' (rpoBC) from Helicobacter hepaticus (strain ATCC 51449 / 3B1).